We begin with the raw amino-acid sequence, 989 residues long: Vacuolar membrane protease (989 aa).

The tract at residues 1-25 is disordered; that stretch reads MDRQSLRTTLRAMDASNENGSAKGA. At 1 to 41 the chain is on the cytoplasmic side; the sequence is MDRQSLRTTLRAMDASNENGSAKGAKKTTIGSFVRWTFGFN. Residues 42–62 traverse the membrane as a helical segment; that stretch reads SVPLTTLVTITTVLLGLLVYV. Topologically, residues 63–383 are vacuolar; the sequence is STSVNPPDVT…YLFIILPLQY (321 aa). 2 residues coordinate Zn(2+): His181 and Asp193. Glu227 acts as the Proton acceptor in catalysis. Glu228 contacts Zn(2+). The N-linked (GlcNAc...) asparagine glycan is linked to Asn245. 2 residues coordinate Zn(2+): Glu253 and His325. Residues 384-404 form a helical membrane-spanning segment; it reads IFVISCLTLAVGPIFVGFLFL. Topologically, residues 405-426 are cytoplasmic; it reads LVLRKQINAGTSETILGGWLRS. Residues 427-447 form a helical membrane-spanning segment; the sequence is IVSVLVSVVATYFVVETLHLG. Residues 448–460 are Vacuolar-facing; it reads NELYVVRSFYTPL. A helical transmembrane segment spans residues 461-481; the sequence is FAGLGTFIFVNYVLLGFFHFV. Over 482 to 488 the chain is Cytoplasmic; sequence RPVCDQK. A helical transmembrane segment spans residues 489–509; the sequence is LIILLELSVVLWVLLLLSVIH. Residues 510 to 520 lie on the Vacuolar side of the membrane; that stretch reads EATHKATGEYH. Residues 521–541 traverse the membrane as a helical segment; it reads FLILYIVVATASILGLFGHLV. Topologically, residues 542-611 are cytoplasmic; it reads TSTETSTFVE…IAVSMGYDWS (70 aa). Residues 548 to 576 are disordered; sequence TFVEGPEDEEDTVDASEATETSPLLPEAS. Acidic residues predominate over residues 552 to 561; that stretch reads GPEDEEDTVD. Residues 612-632 form a helical membrane-spanning segment; the sequence is IQFLLVVPITFFVTFGLAASL. The Vacuolar portion of the chain corresponds to 633–648; it reads LDGLHQTPLESEKSAD. A helical transmembrane segment spans residues 649–669; sequence FVYTTITAMSVLVGITFLPFV. Residues 670–673 are Cytoplasmic-facing; that stretch reads HKLQ. The helical transmembrane segment at 674–694 threads the bilayer; the sequence is VFVPIVVVGVAVTASFVHILS. The Vacuolar portion of the chain corresponds to 695–989; the sequence is PPFSSNAPAK…LVEVSKYVEL (295 aa). 3 N-linked (GlcNAc...) asparagine glycosylation sites follow: Asn745, Asn793, and Asn822.

This sequence belongs to the peptidase M28 family. Zn(2+) is required as a cofactor.

It localises to the vacuole membrane. In terms of biological role, may be involved in vacuolar sorting and osmoregulation. This chain is Vacuolar membrane protease, found in Yarrowia lipolytica (strain CLIB 122 / E 150) (Yeast).